The primary structure comprises 185 residues: Ribosome-recycling factor (185 aa).

Belongs to the RRF family.

It localises to the cytoplasm. In terms of biological role, responsible for the release of ribosomes from messenger RNA at the termination of protein biosynthesis. May increase the efficiency of translation by recycling ribosomes from one round of translation to another. The protein is Ribosome-recycling factor of Streptococcus pneumoniae serotype 2 (strain D39 / NCTC 7466).